The sequence spans 321 residues: L-carnitine dehydrogenase (321 aa).

An NAD(+)-binding site is contributed by 14–19 (GSGVIG).

This sequence belongs to the 3-hydroxyacyl-CoA dehydrogenase family. L-carnitine dehydrogenase subfamily. Homodimer.

Its subcellular location is the cytoplasm. The enzyme catalyses carnitine + NAD(+) = 3-dehydrocarnitine + NADH + H(+). The protein operates within amine and polyamine metabolism; carnitine metabolism. In terms of biological role, catalyzes the NAD(+)-dependent oxidation of L-carnitine to 3-dehydrocarnitine. In Pseudomonas putida (strain ATCC 47054 / DSM 6125 / CFBP 8728 / NCIMB 11950 / KT2440), this protein is L-carnitine dehydrogenase.